The following is a 606-amino-acid chain: Isocitrate dehydrogenase kinase/phosphatase (606 aa).

ATP is bound by residues 354–360 (APGFKGT) and Lys-375. Asp-414 is an active-site residue.

This sequence belongs to the AceK family.

The protein localises to the cytoplasm. It carries out the reaction L-seryl-[isocitrate dehydrogenase] + ATP = O-phospho-L-seryl-[isocitrate dehydrogenase] + ADP + H(+). In terms of biological role, bifunctional enzyme which can phosphorylate or dephosphorylate isocitrate dehydrogenase (IDH) on a specific serine residue. This is a regulatory mechanism which enables bacteria to bypass the Krebs cycle via the glyoxylate shunt in response to the source of carbon. When bacteria are grown on glucose, IDH is fully active and unphosphorylated, but when grown on acetate or ethanol, the activity of IDH declines drastically concomitant with its phosphorylation. In Rhodopseudomonas palustris (strain BisB5), this protein is Isocitrate dehydrogenase kinase/phosphatase.